The sequence spans 185 residues: Elongation factor P (185 aa).

The protein belongs to the elongation factor P family.

It is found in the cytoplasm. Its pathway is protein biosynthesis; polypeptide chain elongation. In terms of biological role, involved in peptide bond synthesis. Stimulates efficient translation and peptide-bond synthesis on native or reconstituted 70S ribosomes in vitro. Probably functions indirectly by altering the affinity of the ribosome for aminoacyl-tRNA, thus increasing their reactivity as acceptors for peptidyl transferase. This chain is Elongation factor P, found in Bacillus cereus (strain B4264).